Consider the following 164-residue polypeptide: Ribosome maturation factor RimM (164 aa).

The region spanning 90 to 161 (EGRYYVADII…EIIIKPVKTW (72 aa)) is the PRC barrel domain.

It belongs to the RimM family. Binds ribosomal protein uS19.

The protein resides in the cytoplasm. An accessory protein needed during the final step in the assembly of 30S ribosomal subunit, possibly for assembly of the head region. Essential for efficient processing of 16S rRNA. May be needed both before and after RbfA during the maturation of 16S rRNA. It has affinity for free ribosomal 30S subunits but not for 70S ribosomes. This chain is Ribosome maturation factor RimM, found in Clostridium tetani (strain Massachusetts / E88).